The following is a 988-amino-acid chain: Protein SEMI-ROLLED LEAF 2 (988 aa).

Residues 844-865 (SVDGGLHESPITNTGSSISKTT) form a disordered region. Residues 853 to 865 (PITNTGSSISKTT) show a composition bias toward polar residues.

Expressed in root tips, and in the vascular bundles of leaf blades, leaf sheaths, and roots, especially in their sclerenchymatous cells.

It is found in the nucleus. The protein localises to the cytoplasm. Functionally, functions in regulating leaf rolling through abaxial side leaf cell differentiation. May be involved in the transdifferentiation process from mesophyll cells to sclerenchymatous cells. The chain is Protein SEMI-ROLLED LEAF 2 from Oryza sativa subsp. japonica (Rice).